Consider the following 66-residue polypeptide: Metallothionein-like protein type 3 (66 aa).

This sequence belongs to the metallothionein superfamily. Type 15 family.

In terms of biological role, metallothioneins have a high content of cysteine residues that bind various heavy metals. In Malus domestica (Apple), this protein is Metallothionein-like protein type 3 (MT2).